A 371-amino-acid chain; its full sequence is Macronuclear solute carrier homolog CR-MSC (371 aa).

Solcar repeat units follow at residues 16-111 (RMNY…FYDK), 120-208 (ARPD…CKEN), and 215-304 (PHWI…LSQF). 6 helical membrane-spanning segments follow: residues 22–42 (FAAA…LDMV), 89–109 (TFFF…GYFY), 126–146 (VAAG…IDIV), 184–204 (AGAN…IYDW), 221–241 (LWGT…FDMI), and 281–301 (FGSF…ICYL).

This sequence belongs to the mitochondrial carrier (TC 2.A.29) family.

Its subcellular location is the membrane. This Oxytricha fallax protein is Macronuclear solute carrier homolog CR-MSC.